Consider the following 463-residue polypeptide: Tryptophan aminotransferase-related protein 4 (463 aa).

A helical membrane pass occupies residues 6–26 (LLLIVSIILNLVFTIHILYYS). Pyridoxal 5'-phosphate-binding positions include Tyr124, 163 to 164 (TT), Asn239, 259 to 262 (DYAY), 282 to 285 (SLSK), and Arg293. An N6-(pyridoxal phosphate)lysine modification is found at Lys285.

This sequence belongs to the alliinase family. Requires pyridoxal 5'-phosphate as cofactor.

It is found in the membrane. In terms of biological role, probable aminotransferase. This Arabidopsis thaliana (Mouse-ear cress) protein is Tryptophan aminotransferase-related protein 4 (TAR4).